The chain runs to 875 residues: Neurotrypsin (875 aa).

Positions 1 to 20 (MTLARFVLALVLGALPEVVG) are cleaved as a signal peptide. N26 carries an N-linked (GlcNAc...) asparagine glycan. The disordered stretch occupies residues 29–68 (LHHRHRHSPPPGPQYPYYLPTHQRPPRTRPPPPLPRFSRP). One can recognise a Kringle domain in the interval 93–165 (CPPGEPWVSV…GKVDWGYCDC (73 aa)). Cystine bridges form between C93–C165, C109–C149, C138–C163, C195–C259, C208–C269, C239–C249, C305–C369, C318–C379, C349–C359, C412–C475, C425–C485, C455–C465, C525–C589, C538–C599, C569–C579, C619–C750, C661–C677, C765–C831, C794–C808, and C821–C850. SRCR domains lie at 170 to 271 (VRLR…TCSF), 280 to 381 (IRLV…SCTP), 387 to 487 (IRLA…ACYP), and 500 to 601 (VRLM…ICDY). Residues 619–630 (CGLRLLHRRQKR) form a zymogen activation region region. A Peptidase S1 domain is found at 631 to 874 (IIGGKNSLRG…FVPWIKSVTK (244 aa)). H676 acts as the Charge relay system in catalysis. An N-linked (GlcNAc...) asparagine glycan is attached at N683. The active-site Charge relay system is the D726. S825 serves as the catalytic Charge relay system.

Belongs to the peptidase S1 family.

It is found in the secreted. In terms of biological role, plays a role in neuronal plasticity and the proteolytic action may subserve structural reorganizations associated with learning and memory operations. In Trachypithecus phayrei (Phayre's leaf monkey), this protein is Neurotrypsin (PRSS12).